A 34-amino-acid polypeptide reads, in one-letter code: Photosystem II reaction center protein M (34 aa).

The chain crosses the membrane as a helical span at residues Ile-5–Leu-25.

This sequence belongs to the PsbM family. As to quaternary structure, PSII is composed of 1 copy each of membrane proteins PsbA, PsbB, PsbC, PsbD, PsbE, PsbF, PsbH, PsbI, PsbJ, PsbK, PsbL, PsbM, PsbT, PsbX, PsbY, PsbZ, Psb30/Ycf12, at least 3 peripheral proteins of the oxygen-evolving complex and a large number of cofactors. It forms dimeric complexes.

The protein localises to the plastid. It localises to the chloroplast thylakoid membrane. Functionally, one of the components of the core complex of photosystem II (PSII). PSII is a light-driven water:plastoquinone oxidoreductase that uses light energy to abstract electrons from H(2)O, generating O(2) and a proton gradient subsequently used for ATP formation. It consists of a core antenna complex that captures photons, and an electron transfer chain that converts photonic excitation into a charge separation. This subunit is found at the monomer-monomer interface. The chain is Photosystem II reaction center protein M from Chaetosphaeridium globosum (Charophycean green alga).